Consider the following 407-residue polypeptide: Type II secretion system protein L (407 aa).

At 1–257 (MEGSVSEFLT…WLRYWQIWRK (257 aa)) the chain is on the cytoplasmic side. A helical transmembrane segment spans residues 258–275 (VAIAAGLFVAVSISYSLF). Residues 276-407 (QAHQYEAQAD…VFGVFVVKPK (132 aa)) are Periplasmic-facing.

Belongs to the GSP L family. As to quaternary structure, type II secretion system is composed of four main components: the outer membrane complex, the inner membrane complex, the cytoplasmic secretion ATPase and the periplasm-spanning pseudopilus. Forms homodimers. Interacts with EpsM/GspM. Interacts with EpsE/GspE and EpsF/GspF.

It localises to the cell inner membrane. Its function is as follows. Inner membrane component of the type II secretion system required for the energy-dependent secretion of extracellular factors such as proteases and toxins from the periplasm. Plays a role in the complex assembly and recruits EpsM resulting in a stable complex in the inner membrane. Provides thus a link between the energy-providing EpsE protein in the cytoplasm and the rest of the T2SS machinery. The chain is Type II secretion system protein L (epsL) from Vibrio cholerae serotype O1 (strain ATCC 39315 / El Tor Inaba N16961).